The chain runs to 575 residues: Serine/threonine-protein kinase STY46 (575 aa).

The disordered stretch occupies residues 116-140 (ADLDSTSNDAGHSSPTRKSIHPPPA). Polar residues predominate over residues 118–132 (LDSTSNDAGHSSPTR). One can recognise an ACT domain in the interval 178 to 252 (EITFSTEDKP…AKIELQSQSW (75 aa)). Positions 290-543 (LKFGHKIASG…EIIEQLQEIA (254 aa)) constitute a Protein kinase domain. ATP contacts are provided by residues 296-304 (IASGSYGDL) and Lys-317. The active-site Proton acceptor is Asp-411. Thr-443 carries the phosphothreonine modification.

This sequence belongs to the protein kinase superfamily. Ser/Thr protein kinase family. Post-translationally, autophosphorylated on serine and threonine residues. Autophosphorylated at Thr-443.

The protein resides in the cytoplasm. Its subcellular location is the cytosol. It catalyses the reaction L-seryl-[protein] + ATP = O-phospho-L-seryl-[protein] + ADP + H(+). It carries out the reaction L-threonyl-[protein] + ATP = O-phospho-L-threonyl-[protein] + ADP + H(+). Its activity is regulated as follows. Activated by autophosphorylation at Thr-443. In terms of biological role, serine/threonine protein kinase that specifically phosphorylates chloroplast precursor proteins in the cytosol within the cleavable presequences (transit peptides). May be part of a cytosolic regulatory network involved in chloroplast protein import. Does not phosphorylate mitochondrion precursor proteins. Specific for ATP and does not utilize other NTPs. Plays a role in chloroplast biogenesis and differentiation in cotyledons, possibly through phosphorylation of chloroplast preproteins. The chain is Serine/threonine-protein kinase STY46 from Arabidopsis thaliana (Mouse-ear cress).